The following is a 70-amino-acid chain: Large ribosomal subunit protein uL29 (70 aa).

Belongs to the universal ribosomal protein uL29 family.

The sequence is that of Large ribosomal subunit protein uL29 from Clostridium botulinum (strain Alaska E43 / Type E3).